We begin with the raw amino-acid sequence, 200 residues long: Dephospho-CoA kinase (200 aa).

The DPCK domain occupies 4 to 200 (TIGLTGSVAT…TFIKRFVKNK (197 aa)). 12 to 17 (ATGKST) is a binding site for ATP.

This sequence belongs to the CoaE family.

The protein resides in the cytoplasm. The enzyme catalyses 3'-dephospho-CoA + ATP = ADP + CoA + H(+). Its pathway is cofactor biosynthesis; coenzyme A biosynthesis; CoA from (R)-pantothenate: step 5/5. Functionally, catalyzes the phosphorylation of the 3'-hydroxyl group of dephosphocoenzyme A to form coenzyme A. This Listeria monocytogenes serotype 4b (strain F2365) protein is Dephospho-CoA kinase.